We begin with the raw amino-acid sequence, 771 residues long: Semaphorin-3A (771 aa).

A signal peptide spans 1-20 (MGWLTRIVCLFWGVLLTARA). A Sema domain is found at 31–514 (RLKLSYKEML…STAGVAQLPL (484 aa)). Asn-53 carries N-linked (GlcNAc...) asparagine glycosylation. Cysteines 103 and 114 form a disulfide. The N-linked (GlcNAc...) asparagine glycan is linked to Asn-125. Cystine bridges form between Cys-132/Cys-141, Cys-269/Cys-381, Cys-293/Cys-341, and Cys-517/Cys-535. Residues 580-664 (PEERIIYGVE…GFIQTLLKVT (85 aa)) enclose the Ig-like C2-type domain. A glycan (N-linked (GlcNAc...) asparagine) is linked at Asn-590. Cysteines 649 and 722 form a disulfide. Positions 728 to 737 (RDRKQRRQRP) are enriched in basic residues. The tract at residues 728–771 (RDRKQRRQRPGHTPGNSNKWKHLQENKKGRNRRTHEFERAPRSV) is disordered. Positions 749–771 (HLQENKKGRNRRTHEFERAPRSV) are enriched in basic and acidic residues.

Belongs to the semaphorin family. In terms of assembly, interacts with PLXND1. Expressed in the dorsal root ganglia.

It is found in the secreted. Functionally, involved in the development of the olfactory system and in neuronal control of puberty. Induces the collapse and paralysis of neuronal growth cones. Could serve as a ligand that guides specific growth cones by a motility-inhibiting mechanism. Binds to the complex neuropilin-1/plexin-1. The protein is Semaphorin-3A (SEMA3A) of Homo sapiens (Human).